Reading from the N-terminus, the 439-residue chain is Tol-Pal system protein TolB (439 aa).

An N-terminal signal peptide occupies residues 1 to 22 (MKKPLRWLAALTALLLPLSAFA).

Belongs to the TolB family. As to quaternary structure, the Tol-Pal system is composed of five core proteins: the inner membrane proteins TolA, TolQ and TolR, the periplasmic protein TolB and the outer membrane protein Pal. They form a network linking the inner and outer membranes and the peptidoglycan layer.

The protein resides in the periplasm. Functionally, part of the Tol-Pal system, which plays a role in outer membrane invagination during cell division and is important for maintaining outer membrane integrity. The chain is Tol-Pal system protein TolB from Xanthomonas campestris pv. campestris (strain 8004).